We begin with the raw amino-acid sequence, 207 residues long: Large ribosomal subunit protein uL4 (207 aa).

A disordered region spans residues 47–78 (GTAKTKTRAEVRGGGKKPWRQKGTGRARQGSI). A compositionally biased stretch (basic residues) spans 60–71 (GGKKPWRQKGTG).

It belongs to the universal ribosomal protein uL4 family. In terms of assembly, part of the 50S ribosomal subunit.

Its function is as follows. One of the primary rRNA binding proteins, this protein initially binds near the 5'-end of the 23S rRNA. It is important during the early stages of 50S assembly. It makes multiple contacts with different domains of the 23S rRNA in the assembled 50S subunit and ribosome. Forms part of the polypeptide exit tunnel. The sequence is that of Large ribosomal subunit protein uL4 from Acholeplasma laidlawii (strain PG-8A).